A 52-amino-acid polypeptide reads, in one-letter code: Movement protein TGBp3 (52 aa).

Residues 1-3 (MHE) are Lumenal-facing. The chain crosses the membrane as a helical span at residues 4–21 (SHLVVILALLLLALWCLS). Residues 22–52 (TRPVQPSCHVEINGHSIIVTGNCWHSTQRPH) are Cytoplasmic-facing.

It belongs to the Tymovirales TGBp3 protein family.

Its subcellular location is the host endoplasmic reticulum membrane. Functionally, plays a role in viral cell-to-cell propagation, by facilitating genome transport to neighboring plant cells through plasmosdesmata. May induce the formation of granular vesicles derived from the Endoplasmic reticulum, which align on actin filaments. This Foxtail mosaic virus protein is Movement protein TGBp3.